The primary structure comprises 249 residues: Triosephosphate isomerase (249 aa).

Position 12-14 (N12–K14) interacts with substrate. The active-site Electrophile is H96. E166 (proton acceptor) is an active-site residue. Residues G172, S211, and G232–G233 contribute to the substrate site.

Belongs to the triosephosphate isomerase family. In terms of assembly, homodimer.

It localises to the cytoplasm. The catalysed reaction is D-glyceraldehyde 3-phosphate = dihydroxyacetone phosphate. The protein operates within carbohydrate biosynthesis; gluconeogenesis. It functions in the pathway carbohydrate degradation; glycolysis; D-glyceraldehyde 3-phosphate from glycerone phosphate: step 1/1. Involved in the gluconeogenesis. Catalyzes stereospecifically the conversion of dihydroxyacetone phosphate (DHAP) to D-glyceraldehyde-3-phosphate (G3P). This chain is Triosephosphate isomerase, found in Xanthobacter flavus.